Reading from the N-terminus, the 530-residue chain is uncharacterized protein (530 aa).

It belongs to the protein kinase superfamily. ADCK protein kinase family.

This is an uncharacterized protein from Clostridium pasteurianum.